The sequence spans 495 residues: Carotenoid 3,4-desaturase (495 aa).

This sequence belongs to the carotenoid/retinoid oxidoreductase family.

It carries out the reaction dihydroisopentenyldehydrorhodopin + A = isopentenyldehydrorhodopin + AH2. The catalysed reaction is dihydrobisanhydrobacterioruberin + A = bisanhydrobacterioruberin + AH2. It functions in the pathway carotenoid biosynthesis. Involved in the biosynthesis of the acyclic C50 carotenoid bacterioruberin (BR). CrtD is involved in the desaturation reactions that form double bonds at C-3,4 of dihydroisopentenyldehydrorhodopin (DH-IDR) and C-3',4' of dihydrobisanhydrobacterioruberin (DH-BABR) to yield isopentenyld ehydrorhodopin (IDR) and bisanhydrobacterioruberin (BABR), respectively. This chain is Carotenoid 3,4-desaturase, found in Haloarcula japonica (strain ATCC 49778 / DSM 6131 / JCM 7785 / NBRC 101032 / NCIMB 13157 / TR-1).